Consider the following 578-residue polypeptide: Potassium-transporting ATPase potassium-binding subunit (578 aa).

Helical transmembrane passes span 3–23 (NAILQYSLYLIILVLLAIPLG), 65–85 (SFSVLAFSAVGFIFLFALNLL), 134–154 (GLTVQNFLSAGVGIAVLFALI), 175–195 (IVLYLLVPLSIVLSILLVSQG), 261–281 (FSNLLEMLSILLIPAALCFTF), 293–313 (AIFIAMFTLLIIALCIIGVSE), 397–417 (GLYGMIAFAIITVFIAGLMVG), 435–455 (AMLICLATPISILIGSALASI), 503–523 (IGLIMLFVRFVPMIATLAIAG), and 543–563 (LLFIGLLIFVVLLVGALSFFP).

The protein belongs to the KdpA family. As to quaternary structure, the system is composed of three essential subunits: KdpA, KdpB and KdpC.

It localises to the cell membrane. Its function is as follows. Part of the high-affinity ATP-driven potassium transport (or Kdp) system, which catalyzes the hydrolysis of ATP coupled with the electrogenic transport of potassium into the cytoplasm. This subunit binds the extracellular potassium ions and delivers the ions to the membrane domain of KdpB through an intramembrane tunnel. The chain is Potassium-transporting ATPase potassium-binding subunit from Clostridium perfringens (strain ATCC 13124 / DSM 756 / JCM 1290 / NCIMB 6125 / NCTC 8237 / Type A).